The following is a 533-amino-acid chain: UDP-glucuronosyltransferase 1A1 (533 aa).

The N-terminal stretch at 1–25 is a signal peptide; that stretch reads MAVESQGGRPLVLGLLLCVLGPVVS. Residues Asn102, Asn295, and Asn347 are each glycosylated (N-linked (GlcNAc...) asparagine). Residues 491 to 507 traverse the membrane as a helical segment; that stretch reads VIGFLLAVVLTVAFITF.

Belongs to the UDP-glycosyltransferase family. Homodimer. Homooligomer. Interacts with UGT1A3, UGT1A4, UGT1A6, UGT1A7, UGT1A8, UGT1A9 and UGT1A10 to form heterodimers. Isoform 1 interacts with isoform 2/i2 suggesting that oligomerization is involved in negative regulation of transferase activity by isoform 2. Isoform 1 also interacts with respective i2 isoforms of UGT1A3, UGT1A4, UGT1A6, UGT1A7, UGT1A8, UGT1A9 and UGT1A10. In terms of tissue distribution, expressed in liver, colon and small intestine. Not expressed in kidney, esophagus and skin. As to expression, expressed in liver, colon, small intestine and kidney. Not expressed in esophagus and skin.

The protein localises to the endoplasmic reticulum membrane. It is found in the cytoplasm. Its subcellular location is the perinuclear region. It catalyses the reaction glucuronate acceptor + UDP-alpha-D-glucuronate = acceptor beta-D-glucuronoside + UDP + H(+). It carries out the reaction 17beta-estradiol + UDP-alpha-D-glucuronate = 17beta-estradiol 3-O-(beta-D-glucuronate) + UDP + H(+). The catalysed reaction is 2-hydroxyestrone + UDP-alpha-D-glucuronate = 2-hydroxyestrone 3-O-(beta-D-glucuronate) + UDP + H(+). The enzyme catalyses 2-hydroxy-17beta-estradiol + UDP-alpha-D-glucuronate = 2-hydroxy-17beta-estradiol 3-O-(beta-D-glucuronate) + UDP + H(+). It catalyses the reaction 2-methoxy-17beta-estradiol + UDP-alpha-D-glucuronate = 2-methoxy-17beta-estradiol 3-O-(beta-D-glucuronate) + UDP + H(+). It carries out the reaction 17alpha-estradiol + UDP-alpha-D-glucuronate = 17alpha-estradiol 3-O-(beta-D-glucuronate) + UDP + H(+). The catalysed reaction is 16beta,17beta-estriol + UDP-alpha-D-glucuronate = 16beta,17beta-estriol 16-O-(beta-D-glucuronate) + UDP + H(+). The enzyme catalyses losartan + UDP-alpha-D-glucuronate = losartan-2-N-beta-D-glucuronide + UDP. It catalyses the reaction prunetin + UDP-alpha-D-glucuronate = prunetin-4'-O-beta-D-glucuronide + UDP. It carries out the reaction SN-38 + UDP-alpha-D-glucuronate = SN-38 O-beta-D-glucuronide + UDP + H(+). The catalysed reaction is (4Z,15Z)-bilirubin IXalpha + UDP-alpha-D-glucuronate = (4Z,15Z)-bilirubin IXalpha C12-beta-D-glucuronoside + UDP. The enzyme catalyses (4Z,15Z)-bilirubin IXalpha + UDP-alpha-D-glucuronate = (4Z,15Z)-bilirubin IXalpha C8-beta-D-glucuronoside + UDP. It catalyses the reaction (4Z,15Z)-bilirubin IXalpha C8-beta-D-glucuronoside + UDP-alpha-D-glucuronate = (4Z,15Z)-bilirubin IXalpha C8,C12-beta-D-bisglucuronoside + UDP. It carries out the reaction (4Z,15Z)-bilirubin IXalpha C12-beta-D-glucuronoside + UDP-alpha-D-glucuronate = (4Z,15Z)-bilirubin IXalpha C8,C12-beta-D-bisglucuronoside + UDP. The catalysed reaction is 8-iso-prostaglandin F2alpha + UDP-alpha-D-glucuronate = 8-iso-prostaglandin F2alpha-glucuronide + UDP + H(+). The enzyme catalyses (5Z,8Z,11Z,14Z)-eicosatetraenoate + UDP-alpha-D-glucuronate = O-[(5Z),(8Z),(11Z),(14Z)-eicosatetraenoyl]-beta-D-glucuronate + UDP. It catalyses the reaction 15-hydroxy-(5Z,8Z,11Z,13E)-eicosatetraenoate + UDP-alpha-D-glucuronate = 15-O-(beta-D-glucuronosyl)-(5Z,8Z,11Z,14Z)-eicosatetraenoate + UDP + H(+). It carries out the reaction 20-hydroxy-(5Z,8Z,11Z,14Z)-eicosatetraenoate + UDP-alpha-D-glucuronate = 20-O-(beta-D-glucuronosyl)-(5Z,8Z,11Z,14Z)-eicosatetraenoate + UDP + H(+). The catalysed reaction is prostaglandin B1 + UDP-alpha-D-glucuronate = 15-O-(beta-D-glucuronosyl)-prostaglandin B1 + UDP + H(+). The enzyme catalyses (E)-ferulate + UDP-alpha-D-glucuronate = (E)-4-O-(beta-D-glucuronosyl)-ferulate + UDP + H(+). It catalyses the reaction (E)-ferulate + UDP-alpha-D-glucuronate = (E)-ferulic acid beta-D-glucuronate ester + UDP. Functionally, UDP-glucuronosyltransferase (UGT) that catalyzes phase II biotransformation reactions in which lipophilic substrates are conjugated with glucuronic acid to increase the metabolite's water solubility, thereby facilitating excretion into either the urine or bile. Essential for the elimination and detoxification of drugs, xenobiotics and endogenous compounds. Catalyzes the glucuronidation of endogenous estrogen hormones such as estradiol, estrone and estriol. Involved in the glucuronidation of bilirubin, a degradation product occurring in the normal catabolic pathway that breaks down heme in vertebrates. Involved in the glucuronidation of arachidonic acid (AA) and AA-derived eicosanoids including 15-HETE, 20-HETE, PGB1 and F2-isoprostane (8-iso-PGF2alpha). Involved in the glucuronidation of the phytochemical ferulic acid at the phenolic or the carboxylic acid group. Also catalyzes the glucuronidation the isoflavones genistein, daidzein, glycitein, formononetin, biochanin A and prunetin, which are phytoestrogens with anticancer and cardiovascular properties. Involved in the glucuronidation of the AGTR1 angiotensin receptor antagonist losartan, a drug which can inhibit the effect of angiotensin II. Involved in the biotransformation of 7-ethyl-10-hydroxycamptothecin (SN-38), the pharmacologically active metabolite of the anticancer drug irinotecan. In terms of biological role, lacks UGT glucuronidation activity but acts as a negative regulator of isoform 1. This is UDP-glucuronosyltransferase 1A1 from Homo sapiens (Human).